The chain runs to 383 residues: Queuine tRNA-ribosyltransferase (383 aa).

D90 serves as the catalytic Proton acceptor. Substrate-binding positions include 90–94, D144, Q193, and G227; that span reads DSGGF. The tract at residues 258 to 264 is RNA binding; the sequence is GVGTPED. The active-site Nucleophile is D277. The RNA binding; important for wobble base 34 recognition stretch occupies residues 282–286; the sequence is TRNAR. Residues C315, C317, C320, and H346 each contribute to the Zn(2+) site.

This sequence belongs to the queuine tRNA-ribosyltransferase family. In terms of assembly, homodimer. Within each dimer, one monomer is responsible for RNA recognition and catalysis, while the other monomer binds to the replacement base PreQ1. Zn(2+) serves as cofactor.

It carries out the reaction 7-aminomethyl-7-carbaguanine + guanosine(34) in tRNA = 7-aminomethyl-7-carbaguanosine(34) in tRNA + guanine. Its pathway is tRNA modification; tRNA-queuosine biosynthesis. Functionally, catalyzes the base-exchange of a guanine (G) residue with the queuine precursor 7-aminomethyl-7-deazaguanine (PreQ1) at position 34 (anticodon wobble position) in tRNAs with GU(N) anticodons (tRNA-Asp, -Asn, -His and -Tyr). Catalysis occurs through a double-displacement mechanism. The nucleophile active site attacks the C1' of nucleotide 34 to detach the guanine base from the RNA, forming a covalent enzyme-RNA intermediate. The proton acceptor active site deprotonates the incoming PreQ1, allowing a nucleophilic attack on the C1' of the ribose to form the product. After dissociation, two additional enzymatic reactions on the tRNA convert PreQ1 to queuine (Q), resulting in the hypermodified nucleoside queuosine (7-(((4,5-cis-dihydroxy-2-cyclopenten-1-yl)amino)methyl)-7-deazaguanosine). The protein is Queuine tRNA-ribosyltransferase of Ralstonia nicotianae (strain ATCC BAA-1114 / GMI1000) (Ralstonia solanacearum).